Here is a 289-residue protein sequence, read N- to C-terminus: Inorganic pyrophosphatase (289 aa).

At serine 2 the chain carries N-acetylserine. Lysine 57 carries the N6-acetyllysine modification. Residues aspartate 116, aspartate 121, and aspartate 153 each contribute to the Mg(2+) site. Lysine 228 is subject to N6-acetyllysine. Position 250 is a phosphoserine (serine 250).

The protein belongs to the PPase family. As to quaternary structure, homodimer. Requires Mg(2+) as cofactor.

Its subcellular location is the cytoplasm. It carries out the reaction diphosphate + H2O = 2 phosphate + H(+). In Macaca fascicularis (Crab-eating macaque), this protein is Inorganic pyrophosphatase (PPA1).